Here is a 206-residue protein sequence, read N- to C-terminus: Large ribosomal subunit protein uL4 (206 aa).

This sequence belongs to the universal ribosomal protein uL4 family. Part of the 50S ribosomal subunit.

Its function is as follows. One of the primary rRNA binding proteins, this protein initially binds near the 5'-end of the 23S rRNA. It is important during the early stages of 50S assembly. It makes multiple contacts with different domains of the 23S rRNA in the assembled 50S subunit and ribosome. Forms part of the polypeptide exit tunnel. The sequence is that of Large ribosomal subunit protein uL4 from Rhodopseudomonas palustris (strain BisB18).